Reading from the N-terminus, the 492-residue chain is Transcript termination protein A18 (492 aa).

A Helicase ATP-binding domain is found at 100–256 (MIELKRPLYI…NSIINIAKLS (157 aa)). 113–120 (LACGFGKT) is an ATP binding site. Positions 206-209 (DESH) match the DESH box motif.

The protein belongs to the helicase family. Poxviruses subfamily. As to quaternary structure, interacts with G2. Might be part of a transcription complex composed at least of G2, A18, and H5.

The protein localises to the virion. In terms of biological role, DNA helicase which seems to act as a postreplicative transcription termination factor. Involved in ATP-dependent release of nascent RNA. Forms a stable complex with single-stranded DNA, and to a lesser extent RNA. In Bos taurus (Bovine), this protein is Transcript termination protein A18.